The chain runs to 320 residues: MQTRNAFSCIKEGITRSISISVMIYIIIRAPFSNAYPIFAQQGYENPREATGRIVCANCHLANKPVDIEVPQAVLPDTVFEAVVRIPYDMQVKQVLANGKKGTLNVGAVLILPEGFELAPPDRISPEIKEKIGNLSFQNYRPTKKNILVVGPVPGQKYKEITFPILSPDPASKRDIHFLKYPIYVGGNRGRGQIYLDGSKSNNNVYNATAAGIVKKIIRKEKGGYEITIVDTLDEHEVIDIIPPGPELLVSEGESIKLDQPLTSNPNVGGFGQGDAEIVLQDPLRVQGLLFFLASIILAQIFLVLKKKQFEKVQLFEMNF.

The first 35 residues, 1-35 (MQTRNAFSCIKEGITRSISISVMIYIIIRAPFSNA), serve as a signal peptide directing secretion. Y36, C56, C59, and H60 together coordinate heme. A helical membrane pass occupies residues 286-306 (VQGLLFFLASIILAQIFLVLK).

This sequence belongs to the cytochrome f family. The 4 large subunits of the cytochrome b6-f complex are cytochrome b6, subunit IV (17 kDa polypeptide, petD), cytochrome f and the Rieske protein, while the 4 small subunits are PetG, PetL, PetM and PetN. The complex functions as a dimer. It depends on heme as a cofactor.

It is found in the plastid. The protein resides in the chloroplast thylakoid membrane. Functionally, component of the cytochrome b6-f complex, which mediates electron transfer between photosystem II (PSII) and photosystem I (PSI), cyclic electron flow around PSI, and state transitions. The sequence is that of Cytochrome f from Phaseolus vulgaris (Kidney bean).